A 91-amino-acid polypeptide reads, in one-letter code: Non-specific lipid-transfer protein P5 (91 aa).

4 disulfides stabilise this stretch: Cys-3/Cys-50, Cys-13/Cys-27, Cys-28/Cys-73, and Cys-48/Cys-87.

It localises to the secreted. Plant non-specific lipid-transfer proteins transfer phospholipids as well as galactolipids across membranes. May play a role in wax or cutin deposition in the cell walls of expanding epidermal cells and certain secretory tissues. The sequence is that of Non-specific lipid-transfer protein P5 from Vitis sp. (Grape).